The sequence spans 82 residues: Penaeidin-3h (82 aa).

A signal peptide spans 1-19 (MRLVVCLVFLASFALVCQG). Pyrrolidone carboxylic acid is present on Q20. Disulfide bonds link C55–C73 and C67–C74. S81 bears the Serine amide mark.

It belongs to the penaeidin family.

The protein resides in the cytoplasmic granule. Its function is as follows. Antibacterial and antifungal activity. Presents chitin-binding activity. The sequence is that of Penaeidin-3h from Penaeus vannamei (Whiteleg shrimp).